A 294-amino-acid polypeptide reads, in one-letter code: 1D-myo-inositol 2-acetamido-2-deoxy-alpha-D-glucopyranoside deacetylase (294 aa).

Zn(2+)-binding residues include H13, D16, and H148.

Belongs to the MshB deacetylase family. The cofactor is Zn(2+).

The enzyme catalyses 1D-myo-inositol 2-acetamido-2-deoxy-alpha-D-glucopyranoside + H2O = 1D-myo-inositol 2-amino-2-deoxy-alpha-D-glucopyranoside + acetate. Its function is as follows. Catalyzes the deacetylation of 1D-myo-inositol 2-acetamido-2-deoxy-alpha-D-glucopyranoside (GlcNAc-Ins) in the mycothiol biosynthesis pathway. The polypeptide is 1D-myo-inositol 2-acetamido-2-deoxy-alpha-D-glucopyranoside deacetylase (Geodermatophilus obscurus (strain ATCC 25078 / DSM 43160 / JCM 3152 / CCUG 61914 / KCC A-0152 / KCTC 9177 / NBRC 13315 / NRRL B-3577 / G-20)).